The chain runs to 157 residues: uncharacterized protein (157 aa).

Residues 3–157 (FTLEDMTEEE…TNIRMRKQLC (155 aa)) enclose the N-acetyltransferase domain.

The protein belongs to the acetyltransferase family.

This is an uncharacterized protein from Bacillus subtilis (strain 168).